The following is a 34-amino-acid chain: Photosystem II reaction center protein Psb30 (34 aa).

A helical membrane pass occupies residues 6-26; sequence VIGQLVSTGAIMLLGPAIIIL.

The protein belongs to the Psb30/Ycf12 family. As to quaternary structure, PSII is composed of 1 copy each of membrane proteins PsbA, PsbB, PsbC, PsbD, PsbE, PsbF, PsbH, PsbI, PsbJ, PsbK, PsbL, PsbM, PsbT, PsbX, PsbY, PsbZ, Psb30/Ycf12, peripheral proteins of the oxygen-evolving complex and a large number of cofactors. It forms dimeric complexes.

The protein localises to the plastid. Its subcellular location is the chloroplast thylakoid membrane. Functionally, a core subunit of photosystem II (PSII), probably helps stabilize the reaction center. This is Photosystem II reaction center protein Psb30 from Thalassiosira pseudonana (Marine diatom).